The chain runs to 378 residues: Histidinol-phosphate aminotransferase 2 (378 aa).

N6-(pyridoxal phosphate)lysine is present on lysine 240.

The protein belongs to the class-II pyridoxal-phosphate-dependent aminotransferase family. Histidinol-phosphate aminotransferase subfamily. Homodimer. Requires pyridoxal 5'-phosphate as cofactor.

The enzyme catalyses L-histidinol phosphate + 2-oxoglutarate = 3-(imidazol-4-yl)-2-oxopropyl phosphate + L-glutamate. It functions in the pathway amino-acid biosynthesis; L-histidine biosynthesis; L-histidine from 5-phospho-alpha-D-ribose 1-diphosphate: step 7/9. This is Histidinol-phosphate aminotransferase 2 (hisC2) from Caulobacter vibrioides (strain ATCC 19089 / CIP 103742 / CB 15) (Caulobacter crescentus).